A 106-amino-acid polypeptide reads, in one-letter code: Replication restart protein PriB (106 aa).

Residues 4 to 103 (VNRLVLSGTV…LHAEQIELID (100 aa)) enclose the SSB domain.

Belongs to the PriB family. As to quaternary structure, homodimer. Interacts with PriA and DnaT. Component of the replication restart primosome. Primosome assembly occurs via a 'hand-off' mechanism. PriA binds to replication forks, subsequently PriB then DnaT bind; DnaT then displaces ssDNA to generate the helicase loading substrate.

Its function is as follows. Involved in the restart of stalled replication forks, which reloads the replicative helicase on sites other than the origin of replication; the PriA-PriB pathway is the major replication restart pathway. During primosome assembly it facilitates complex formation between PriA and DnaT on DNA; stabilizes PriA on DNA. Stimulates the DNA unwinding activity of PriA helicase. The polypeptide is Replication restart protein PriB (Pectobacterium carotovorum subsp. carotovorum (strain PC1)).